The following is a 259-amino-acid chain: Type III pantothenate kinase (259 aa).

Residue 6–13 (DVGNTNIV) participates in ATP binding. Substrate-binding positions include Tyr-100 and 107 to 110 (GADR). Asp-109 acts as the Proton acceptor in catalysis. Residue Asp-129 participates in K(+) binding. ATP is bound at residue Thr-132. Thr-184 is a binding site for substrate.

It belongs to the type III pantothenate kinase family. As to quaternary structure, homodimer. The cofactor is NH4(+). K(+) is required as a cofactor.

The protein resides in the cytoplasm. The catalysed reaction is (R)-pantothenate + ATP = (R)-4'-phosphopantothenate + ADP + H(+). The protein operates within cofactor biosynthesis; coenzyme A biosynthesis; CoA from (R)-pantothenate: step 1/5. Its function is as follows. Catalyzes the phosphorylation of pantothenate (Pan), the first step in CoA biosynthesis. The sequence is that of Type III pantothenate kinase from Clostridium perfringens (strain 13 / Type A).